A 159-amino-acid polypeptide reads, in one-letter code: Ribosomal RNA large subunit methyltransferase H (159 aa).

S-adenosyl-L-methionine-binding positions include Leu76, Gly108, and 127–132 (FSKMTF).

This sequence belongs to the RNA methyltransferase RlmH family. In terms of assembly, homodimer.

Its subcellular location is the cytoplasm. It catalyses the reaction pseudouridine(1915) in 23S rRNA + S-adenosyl-L-methionine = N(3)-methylpseudouridine(1915) in 23S rRNA + S-adenosyl-L-homocysteine + H(+). Functionally, specifically methylates the pseudouridine at position 1915 (m3Psi1915) in 23S rRNA. In Clostridium botulinum (strain Alaska E43 / Type E3), this protein is Ribosomal RNA large subunit methyltransferase H.